The primary structure comprises 425 residues: Riboflavin biosynthesis protein RibBA (425 aa).

Positions 1–204 (MTRLDSVERA…IADLIEWRRK (204 aa)) are DHBP synthase. D-ribulose 5-phosphate contacts are provided by residues 28–29 (RE), Asp33, 141–145 (RPGHT), and Glu165. Residue Glu29 coordinates Mg(2+). His144 lines the Mg(2+) pocket. Residues 205–425 (HEKHIERVAE…HLPGEFGGAL (221 aa)) are GTP cyclohydrolase II. Residue 259–263 (RVHSE) participates in GTP binding. Zn(2+) is bound by residues Cys264, Cys275, and Cys277. GTP-binding positions include Gln280, 303–305 (EGR), and Thr325. Residue Asp337 is the Proton acceptor; for GTP cyclohydrolase activity of the active site. The Nucleophile; for GTP cyclohydrolase activity role is filled by Arg339. Thr360 and Lys365 together coordinate GTP.

It in the N-terminal section; belongs to the DHBP synthase family. In the C-terminal section; belongs to the GTP cyclohydrolase II family. Mg(2+) is required as a cofactor. It depends on Mn(2+) as a cofactor. Zn(2+) serves as cofactor.

It carries out the reaction D-ribulose 5-phosphate = (2S)-2-hydroxy-3-oxobutyl phosphate + formate + H(+). The enzyme catalyses GTP + 4 H2O = 2,5-diamino-6-hydroxy-4-(5-phosphoribosylamino)-pyrimidine + formate + 2 phosphate + 3 H(+). It functions in the pathway cofactor biosynthesis; riboflavin biosynthesis; 2-hydroxy-3-oxobutyl phosphate from D-ribulose 5-phosphate: step 1/1. It participates in cofactor biosynthesis; riboflavin biosynthesis; 5-amino-6-(D-ribitylamino)uracil from GTP: step 1/4. In terms of biological role, catalyzes the conversion of D-ribulose 5-phosphate to formate and 3,4-dihydroxy-2-butanone 4-phosphate. Functionally, catalyzes the conversion of GTP to 2,5-diamino-6-ribosylamino-4(3H)-pyrimidinone 5'-phosphate (DARP), formate and pyrophosphate. The sequence is that of Riboflavin biosynthesis protein RibBA from Mycobacterium marinum (strain ATCC BAA-535 / M).